Here is a 364-residue protein sequence, read N- to C-terminus: MPDKPDRNAIEVVNVSKIFGSGEGQVAALDKVSVSIRENEFFTLLGPSGCGKTTLLRLIAGFDFPTAGEILLYGQDIAPLPPFKRPVNTVFQSYALFPHMTVADNIGFGLEMLGKPKAEIKARVAEMLKLVKMEALAGRRTAQISGGQQQRVALARALAPQPKVLLLDEPLSALDYKLRKEMQIELKRLQHETGITFIFVTHDQEEALTMSDRIAVMSSGKILQVGSPWDIYDKPAERFVADFIGETNFLTAAISGTGNGKTRATLKSGTTIEATVAEGFQPKDNATVVVRPEHAKLTKDKGDLSGTVENIVYFGTDTHIHVQLDSGEAFTVRQQNTRSAGCGFDRGDKVGILIGNDAAQVLRD.

One can recognise an ABC transporter domain in the interval 10 to 244; it reads IEVVNVSKIF…PAERFVADFI (235 aa). 46–53 is an ATP binding site; sequence GPSGCGKT.

It belongs to the ABC transporter superfamily. Spermidine/putrescine importer (TC 3.A.1.11.1) family. As to quaternary structure, the complex is composed of two ATP-binding proteins (PotA), two transmembrane proteins (PotB and PotC) and a solute-binding protein (PotD).

The protein resides in the cell inner membrane. It catalyses the reaction ATP + H2O + polyamine-[polyamine-binding protein]Side 1 = ADP + phosphate + polyamineSide 2 + [polyamine-binding protein]Side 1.. Functionally, part of the ABC transporter complex PotABCD involved in spermidine/putrescine import. Responsible for energy coupling to the transport system. This is Spermidine/putrescine import ATP-binding protein PotA from Mesorhizobium japonicum (strain LMG 29417 / CECT 9101 / MAFF 303099) (Mesorhizobium loti (strain MAFF 303099)).